We begin with the raw amino-acid sequence, 699 residues long: SPS-sensor serine protease component SSY5 (699 aa).

Disordered regions lie at residues 1 to 113 (MVRF…LQGF) and 129 to 158 (VKEE…GNAR). Residues 1–381 (MVRFFGLNKE…YCVKDYIKKA (381 aa)) constitute a propeptide that is removed on maturation. A compositionally biased stretch (basic and acidic residues) spans 8 to 18 (NKEKNEEKENT). Residues 24 to 38 (NEQNAAETSSSNVSG) are compositionally biased toward polar residues. Over residues 39–51 (NEERIDPNSRDTN) the composition is skewed to basic and acidic residues. Residues 61–78 (STTFGSSIQSSSIFSRGR) are compositionally biased toward low complexity. Positions 83–93 (TGASSSMATSE) are enriched in polar residues. Over residues 144-154 (SSSTSSTLATS) the composition is skewed to low complexity. The tract at residues 459-699 (FAITCAHVVL…QWDIDPQLDG (241 aa)) is serine protease. Active-site charge relay system residues include H465, D545, and S640.

Belongs to the peptidase S64 family. In terms of assembly, component of the plasma membrane SPS (SSY1-PTR3-SSY5) amino acid sensor complex. In terms of processing, the propeptide is autoproteolytically cleaved from the catalytic domain but remains associated, forming an inactive protease complex. This processing occurs even in the absence of signaling.

It localises to the cell membrane. Its function is as follows. Protease component of the SPS-sensor system, which regulates the expression of several amino acid-metabolizing enzymes and amino acid- and peptide-permeases in response to extracellular amino acid levels by controlling the activity of two transcription factors, STP1 and STP2. Catalyzes the activation of these transcription factors, which are synthesized as latent cytoplasmic precursors, by proteolytic removal of an N-terminal inhibitory domain containing cytoplasmic retention motifs. SSY5 binds as an inactive protease complex to STP1. In response to extracellular amino acids and dependent on the other SPS-sensor components, the inhibitory propeptide is induced to dissociate, and thereby enables the catalytic domain to process STP1. The polypeptide is SPS-sensor serine protease component SSY5 (SSY5) (Saccharomyces cerevisiae (strain AWRI1631) (Baker's yeast)).